Reading from the N-terminus, the 180-residue chain is Type-1 fimbrial protein subunit (180 aa).

Positions 1–22 (MKKVLLPLAALVLSATASNAMA) are cleaved as a signal peptide. A disulfide bridge connects residues C38 and C78.

Belongs to the fimbrial protein family.

Its subcellular location is the fimbrium. Functionally, fimbriae (also called pili), polar filaments radiating from the surface of the bacterium to a length of 0.5-1.5 micrometers and numbering 100-300 per cell, enable bacteria to colonize the epithelium of specific host organs. In Serratia marcescens, this protein is Type-1 fimbrial protein subunit (fimA).